Reading from the N-terminus, the 398-residue chain is CCA-adding enzyme (398 aa).

ATP contacts are provided by G32 and R35. CTP-binding residues include G32 and R35. Mg(2+)-binding residues include D45 and D47. R116, D159, R162, R165, and R168 together coordinate ATP. The CTP site is built by R116, D159, R162, R165, and R168.

It belongs to the tRNA nucleotidyltransferase/poly(A) polymerase family. Bacterial CCA-adding enzyme type 3 subfamily. As to quaternary structure, homodimer. Requires Mg(2+) as cofactor.

It catalyses the reaction a tRNA precursor + 2 CTP + ATP = a tRNA with a 3' CCA end + 3 diphosphate. It carries out the reaction a tRNA with a 3' CCA end + 2 CTP + ATP = a tRNA with a 3' CCACCA end + 3 diphosphate. Catalyzes the addition and repair of the essential 3'-terminal CCA sequence in tRNAs without using a nucleic acid template. Adds these three nucleotides in the order of C, C, and A to the tRNA nucleotide-73, using CTP and ATP as substrates and producing inorganic pyrophosphate. tRNA 3'-terminal CCA addition is required both for tRNA processing and repair. Also involved in tRNA surveillance by mediating tandem CCA addition to generate a CCACCA at the 3' terminus of unstable tRNAs. While stable tRNAs receive only 3'-terminal CCA, unstable tRNAs are marked with CCACCA and rapidly degraded. The sequence is that of CCA-adding enzyme from Lactobacillus gasseri (strain ATCC 33323 / DSM 20243 / BCRC 14619 / CIP 102991 / JCM 1131 / KCTC 3163 / NCIMB 11718 / NCTC 13722 / AM63).